Here is a 268-residue protein sequence, read N- to C-terminus: MSRIKSAFERLNGEGRKALIPFITAGDPDAALTLPLMHTLVEAGADVIELGVPFSDPMADGPTIQRASERALARGMTLRKVLQLVVEFRKTDGKTPVVLMGYANPVEAMGLEKFAAAAAQAGVDGVLIVDYPPEEAAAFGAAMKAQGMDPIFLLAPTSSAERIAHVAEIASGYVYYVSLAGVTGSGALNVEAVAERLPLIREKTGLPVGVGFGIRDAATAARIAGIADAVVVGSRIIEEIEKSTAETACANVKALVADIRRGVDEVKK.

Active-site proton acceptor residues include Glu-49 and Asp-60.

Belongs to the TrpA family. Tetramer of two alpha and two beta chains.

The enzyme catalyses (1S,2R)-1-C-(indol-3-yl)glycerol 3-phosphate + L-serine = D-glyceraldehyde 3-phosphate + L-tryptophan + H2O. Its pathway is amino-acid biosynthesis; L-tryptophan biosynthesis; L-tryptophan from chorismate: step 5/5. Its function is as follows. The alpha subunit is responsible for the aldol cleavage of indoleglycerol phosphate to indole and glyceraldehyde 3-phosphate. This is Tryptophan synthase alpha chain from Dechloromonas aromatica (strain RCB).